A 1775-amino-acid chain; its full sequence is Atrochrysone carboxylic acid synthase (1775 aa).

The N-terminal acylcarrier protein transacylase domain (SAT) stretch occupies residues 29-258 (RSQSKTESGW…QLPVYGGLCH (230 aa)). A Ketosynthase family 3 (KS3) domain is found at 391–821 (DSSIAIVGMA…GGNTSLLIEE (431 aa)). Residues C564, H699, and H740 each act as for beta-ketoacyl synthase activity in the active site. Positions 921–1241 (FVFSGQGSFY…MAQLHNLGVD (321 aa)) are malonyl-CoA:ACP transacylase (MAT) domain. The segment at 1305–1626 (TSLVHRLVCE…RSLINTFFSP (322 aa)) is product template (PT) domain. Residues 1309–1455 (HRLVCESVQE…WLEEWSPMTH (147 aa)) form an N-terminal hotdog fold region. The region spanning 1309-1621 (HRLVCESVQE…FRTFPRSLIN (313 aa)) is the PKS/mFAS DH domain. H1341 acts as the Proton acceptor; for dehydratase activity in catalysis. The tract at residues 1472–1621 (TANRLSRDMV…FRTFPRSLIN (150 aa)) is C-terminal hotdog fold. D1532 acts as the Proton donor; for dehydratase activity in catalysis. A disordered region spans residues 1672 to 1694 (SRTVMDSSDSSPATTLTPPTLPS). The segment covering 1677–1689 (DSSDSSPATTLTP) has biased composition (low complexity). The Carrier domain occupies 1698-1775 (STESPIVHRA…DLKAWLIDYC (78 aa)). The residue at position 1735 (S1735) is an O-(pantetheine 4'-phosphoryl)serine.

In terms of tissue distribution, endocrocin is specifically produced in conidia.

The enzyme catalyses holo-[ACP] + 8 malonyl-CoA + 8 H(+) = atrochrysone carboxyl-[ACP] + 8 CO2 + 8 CoA + 2 H2O. Its pathway is secondary metabolite biosynthesis. Non-reducing polyketide synthase; part of the gene cluster that mediates the biosynthesis of endocrocin, a simple anthraquinone interesting for many biotechnological applications. The pathway begins with the synthesis of atrochrysone thioester by the polyketide synthase (PKS) encA. The atrochrysone carboxyl ACP thioesterase encB then breaks the thioester bond and releases the atrochrysone carboxylic acid from encA. The atrochrysone carboxylic acid is then converted to endocrocin anthrone which is further oxidized into endocrocin by the anthrone oxygenase encC. The exact function of encD has not been identified yet, but it negatively regulates endocrocin production, likely through the modification of endocrocin itself. The polypeptide is Atrochrysone carboxylic acid synthase (Aspergillus fumigatus (strain ATCC MYA-4609 / CBS 101355 / FGSC A1100 / Af293) (Neosartorya fumigata)).